The chain runs to 806 residues: MSSSTLQASLFLRPPLHTSSFKLYPCLFSSSSLSFCPQSLSSFYRLSSVLHNSRFRPLPCSLRQDNVASDSDFIPKDSAFEVTDSAESNRLVSDTEVSELETNDRFVGGEETKSGGEEAEVSNGVTEGKEEDQKKSKFRIVVLMMALWAAIKRAIEKVMEWEWLSWWPFSRQEKRLEKLIAEADANPKDAALQGALLAELNKHIPEAVVQRFEQREHTVDSRGVAEYIRALVITNAISEYLPDEQTGKPSSLPALLQELKHRASGNMDESFVNPGISEKQPLHVTMVNPKVSNKSRFAQELVSTILFTVAVGLVWIMGAAALQKYIGSLGGIGTSGVGSSSSYSPKELNKEITPEKNVKTFKDVKGCDDAKQELEEVVEYLKNPSKFTRLGGKLPKGILLTGAPGTGKTLLAKAIAGEAGVPFFYRAGSEFEEMFVGVGARRVRSLFQAAKKKAPCIIFIDEIDAVGSTRKQWEGHTKKTLHQLLVEMDGFEQNEGIIVMAATNLPDILDPALTRPGRFDRHIVVPSPDVRGREEILELYLQGKPMSEDVDVKAIARGTPGFNGADLANLVNIAAIKAAVEGAEKLSSEQLEFAKDRIVMGTERKTMFVSEDSKKLTAYHESGHAIVALNTKGAHPIHKATIMPRGSALGMVTQLPSNDETSVSKRQLLARLDVCMGGRVAEELIFGLDHITTGASSDLSQATELAQYMVSSCGMSEAIGPVHIKERPSSDMQSRIDAEVVKLLREAYERVKSLLKRHEKQLHTLANALLEYETLTAEDIKRILLPKQEGEKFEEQQQEEGDLVLA.

The transit peptide at 1–63 (MSSSTLQASL…RFRPLPCSLR (63 aa)) directs the protein to the chloroplast and mitochondrion. Residues 106 to 116 (FVGGEETKSGG) show a composition bias toward basic and acidic residues. The tract at residues 106-130 (FVGGEETKSGGEEAEVSNGVTEGKE) is disordered. The chain crosses the membrane as a helical span at residues 301 to 321 (LVSTILFTVAVGLVWIMGAAA). Position 402 to 409 (402 to 409 (GAPGTGKT)) interacts with ATP. His-620 serves as a coordination point for Zn(2+). The active site involves Glu-621. Zn(2+) contacts are provided by His-624 and Asp-698.

In the N-terminal section; belongs to the AAA ATPase family. The protein in the C-terminal section; belongs to the peptidase M41 family. Homooligomer. The cofactor is Zn(2+).

It is found in the mitochondrion inner membrane. It localises to the plastid. The protein resides in the chloroplast thylakoid membrane. Its function is as follows. Probable ATP-dependent zinc metallopeptidase. Involved in the assembly and/or stability of the complexes I and V. Involved in thermotolerance but not in high light stress resistance or in the assembly/stability of the complexes I and V of the mitochondrial oxidative phosphorylation system. This chain is ATP-dependent zinc metalloprotease FTSH 11, chloroplastic/mitochondrial (FTSH11), found in Arabidopsis thaliana (Mouse-ear cress).